The following is a 273-amino-acid chain: Soluble P-type ATPase-like phosphatase (273 aa).

D8 (4-aspartylphosphate intermediate) is an active-site residue.

This sequence belongs to the cation transport ATPase (P-type) (TC 3.A.3) family. Type IB subfamily. It depends on Mg(2+) as a cofactor.

Its activity is regulated as follows. Inhibited by orthovanadate. Most probably acts as a phosphatase in the cytosol. This chain is Soluble P-type ATPase-like phosphatase (patS), found in Methanocaldococcus jannaschii (strain ATCC 43067 / DSM 2661 / JAL-1 / JCM 10045 / NBRC 100440) (Methanococcus jannaschii).